Here is a 218-residue protein sequence, read N- to C-terminus: Probable 1-Cys peroxiredoxin (218 aa).

The region spanning 5–166 is the Thioredoxin domain; sequence WALGDLVPDI…VLRVLDSLQL (162 aa). C47 serves as the catalytic Cysteine sulfenic acid (-SOH) intermediate.

Belongs to the peroxiredoxin family. Prx6 subfamily.

The protein localises to the nucleus. Its subcellular location is the cytoplasm. It catalyses the reaction a hydroperoxide + [thioredoxin]-dithiol = an alcohol + [thioredoxin]-disulfide + H2O. Its function is as follows. Thiol-specific peroxidase that catalyzes the reduction of hydrogen peroxide and organic hydroperoxides to water and alcohols, respectively. Seems to contribute to the inhibition of germination during stress. Associated with the rehydration events involved in the recovery of the desiccation-tolerant moss. In Syntrichia ruralis (Great hairy screw-moss), this protein is Probable 1-Cys peroxiredoxin.